Reading from the N-terminus, the 287-residue chain is Xyloglucan endotransglucosylase protein 1 (287 aa).

The signal sequence occupies residues 1–28 (MAFMSFINGFSTLFLVALLASSMMAAKG). The region spanning 29 to 219 (GNFYQDFDVT…WTKAPFTAYY (191 aa)) is the GH16 domain. The Nucleophile role is filled by E105. Catalysis depends on E109, which acts as the Proton donor. E109 contributes to the xyloglucan binding site. The N-linked (GlcNAc...) asparagine glycan is linked to N113. Residues 122 to 124 (HTN), 132 to 134 (NRE), 198 to 199 (DW), and G203 each bind xyloglucan. Disulfide bonds link C227-C231 and C266-C280. R271 provides a ligand contact to xyloglucan.

Belongs to the glycosyl hydrolase 16 family. XTH group 2 subfamily. Contains at least one intrachain disulfide bond essential for its enzymatic activity. Expressed in fruit pulp. Expressed in leaves, flowers, calyces, stems and fruits. Highest expression in leaves and lowest in fruits.

It localises to the secreted. Its subcellular location is the cell wall. The protein resides in the extracellular space. The protein localises to the apoplast. It catalyses the reaction breaks a beta-(1-&gt;4) bond in the backbone of a xyloglucan and transfers the xyloglucanyl segment on to O-4 of the non-reducing terminal glucose residue of an acceptor, which can be a xyloglucan or an oligosaccharide of xyloglucan.. In terms of biological role, catalyzes xyloglucan endotransglycosylation (XET). Cleaves and religates xyloglucan polymers. Does not catalyze xyloglucan endohydrolysis (XEH). Overexpression in Arabidopsis transgenic plants results in elevated tolerance to abiotic stress, such as salt, ABA (abscisic acid) and drought stresses, and in the production of wider leaves. Overexpression in transgenic tomato plants slows down fruit ripening and softening, and the plants produce larger fruits. Both transgenic plants have larger and more irregular cells. Moreover, the fruits of the transgenic tomato have higher density of cell wall and intercellular spaces. May provide cells with more strength and thickness to maintain structural integrity. Probably involved in cell wall assembly and synthesis in fast growing tissues and in the maintenance of firmness in mature fruits. The polypeptide is Xyloglucan endotransglucosylase protein 1 (Diospyros kaki (Kaki persimmon)).